An 80-amino-acid chain; its full sequence is Exodeoxyribonuclease 7 small subunit (80 aa).

It belongs to the XseB family. As to quaternary structure, heterooligomer composed of large and small subunits.

Its subcellular location is the cytoplasm. The catalysed reaction is Exonucleolytic cleavage in either 5'- to 3'- or 3'- to 5'-direction to yield nucleoside 5'-phosphates.. Its function is as follows. Bidirectionally degrades single-stranded DNA into large acid-insoluble oligonucleotides, which are then degraded further into small acid-soluble oligonucleotides. This is Exodeoxyribonuclease 7 small subunit from Oleidesulfovibrio alaskensis (strain ATCC BAA-1058 / DSM 17464 / G20) (Desulfovibrio alaskensis).